The following is a 236-amino-acid chain: Lipoprotein B (236 aa).

An N-terminal signal peptide occupies residues 1-27 (MNKKYFKKYSSILIFSMSILAPMTLAS). The N-palmitoyl cysteine moiety is linked to residue Cys-28. Cys-28 is lipidated: S-diacylglycerol cysteine. 2 disordered regions span residues 35–112 (EKDK…KSNV) and 134–236 (SEKQ…GDAF). Residues 43 to 60 (STNLSEPNKSNTSKTNTF) are compositionally biased toward polar residues. Residues 61-74 (QDKKDSTNKIDSQE) show a composition bias toward basic and acidic residues. Composition is skewed to polar residues over residues 75 to 112 (SSKT…KSNV) and 143 to 157 (NASS…NTLK). Over residues 158–175 (NQDKTKQENDQFKQESKD) the composition is skewed to basic and acidic residues. A compositionally biased stretch (polar residues) spans 193-212 (VISSQSTTRLEMPKNDQSNS). The segment covering 215–228 (EDNKKSPESPKWWE) has biased composition (basic and acidic residues).

This sequence belongs to the M.pulmonis LipAB lipoprotein family.

Its subcellular location is the cell membrane. The protein is Lipoprotein B (lipB) of Mycoplasmopsis pulmonis (strain UAB CTIP) (Mycoplasma pulmonis).